The primary structure comprises 113 residues: Large ribosomal subunit protein uL22 (113 aa).

The protein belongs to the universal ribosomal protein uL22 family. In terms of assembly, part of the 50S ribosomal subunit.

Its function is as follows. This protein binds specifically to 23S rRNA; its binding is stimulated by other ribosomal proteins, e.g. L4, L17, and L20. It is important during the early stages of 50S assembly. It makes multiple contacts with different domains of the 23S rRNA in the assembled 50S subunit and ribosome. Functionally, the globular domain of the protein is located near the polypeptide exit tunnel on the outside of the subunit, while an extended beta-hairpin is found that lines the wall of the exit tunnel in the center of the 70S ribosome. The polypeptide is Large ribosomal subunit protein uL22 (Bacillus cytotoxicus (strain DSM 22905 / CIP 110041 / 391-98 / NVH 391-98)).